Here is a 1033-residue protein sequence, read N- to C-terminus: MACILCVASLFLSLTKFSIGQREVKIQEGPLYRAEGYPVSIRCTVSGHQGPSTQDFRWSIYLPSAPTKEVQIISTKDAGFSYAVYAQRVQSKEIYIERLQGDSVLLHISKLQMKDAGEYECHTPNTDGKYFGSYSAKTNLTVVPDTLSATMPSQTLSKKEGEPLELTCETTKATVQHTHLSLTWYLMQEGGGSQATEIVSLSKDFVLTPGSSYADRFVAGDVRLDKLGATSFRLSVGKLQPSDQGQVFCEATEWIQDPDETWTLITRKQTDQTALRIQPAARDFTVSITASSSPDEGKPLELVCLAVGRDGNPQLQGVWFLNGKEIAQTDAGGVLDLKRDYRDRASQGQLQVSKLSAQTFSLKIFSVGPEDVGTYSCEVAEVARTQMGSWQVLQRKQSPGYRVQLREPAARSVTVSAEQRTVWEGETLTLLCKAAGDVSALSVSWWLTPQDQSTPVFVAGMGQDGTVQLGVSSPGPAHRGNRRLEKVDWATFRLEIASAMVTDSGTYECRVSERLQNQAKGLQSTQKISVTVKSLKSSLRVNLMSRQPQVMLAHTFHLSCVVRANYSDLKLPFSVTWQFQPAGSGAFHRLIRIAHNGTVEWGDVLSQIHRKTKVSQSFFRSQLQIYDAAMEETGVYRCTVEVYDRDSICTSGPARVSATSNLLMITVTFPESKLSVNSSSQVQELSISSSTQIECAILSRSAGNLPLSIIWYFSSVSANASYLKILEMDQSSVVKYGDEFQTPRSKQKFYSEKVSQDLFLLNILSVEDSDQGHYHCAVEEWLLSTNDTWQKLERKTSGLTELKLRPTGSQVHVSKVNWTGNATEYGEAGFSCSLDGSGSTASLYSVTWYRGRGTATATAAAVANATATITAPAGSQMLVHLQYDGLLQYGREGSRRLQHCYRSSPTDFVLKLHRVEMEDAGIYWCRVTEWQQHGHPGKWINQASGESQRMVLRVLRSEPTVSSLICSSGPLLHFLIVCPFVMLLLLATSFLCLYRKARKLSQLSLSAKKEKALWVGMRKTSLQKEAGEESGHY.

An N-terminal signal peptide occupies residues 1 to 20 (MACILCVASLFLSLTKFSIG). The Extracellular portion of the chain corresponds to 21–970 (QREVKIQEGP…VSSLICSSGP (950 aa)). 7 Ig-like C2-type domains span residues 22–141 (REVK…TNLT), 144–266 (PDTL…TLIT), 279–388 (PAAR…TQMG), 408–529 (PAAR…QKIS), 539–657 (LRVN…ARVS), 670–797 (PESK…RKTS), and 806–941 (PTGS…KWIN). C43 and C121 are oxidised to a cystine. N-linked (GlcNAc...) asparagine glycosylation occurs at N139. C168 and C249 are joined by a disulfide. Residues 253–255 (EWI) carry the EWI motif motif. Intrachain disulfides connect C304–C377, C432–C509, and C560–C638. N-linked (GlcNAc...) asparagine glycosylation occurs at N677. Cystine bridges form between C695–C776 and C832–C925. Residues 971 to 991 (LLHFLIVCPFVMLLLLATSFL) traverse the membrane as a helical segment. Over 992-1033 (CLYRKARKLSQLSLSAKKEKALWVGMRKTSLQKEAGEESGHY) the chain is Cytoplasmic.

N-glycosylated.

The protein localises to the membrane. Functionally, plays a role as inhibitor of T-cells proliferation induced by CD3. Inhibits expression of IL2RA on activated T-cells and secretion of IL2. Inhibits tyrosine kinases that are required for IL2 production and cellular proliferation. Inhibits phospholipase C-gamma-1/PLCG1 phosphorylation and subsequent CD3-induced changes in intracellular free calcium. Prevents nuclear translocation of nuclear factor of activated T-cell to the nucleus. Plays a role in the inhibition of T-cell proliferation via IL10 secretion by cutaneous dendritic cells. This is Immunoglobulin superfamily member 2 (Cd101) from Mus musculus (Mouse).